The following is an 80-amino-acid chain: UPF0154 protein SZO_03240 (80 aa).

Residues 4 to 24 (AIWILLIIVALTAGLFGGIFI) traverse the membrane as a helical segment.

The protein belongs to the UPF0154 family.

Its subcellular location is the cell membrane. This Streptococcus equi subsp. zooepidemicus (strain H70) protein is UPF0154 protein SZO_03240.